Here is a 358-residue protein sequence, read N- to C-terminus: DnaJ homolog subfamily C member 18 (358 aa).

The J domain occupies 82 to 146; sequence NYYEILGVSR…DKRLRYDEYG (65 aa). Residues 228-248 traverse the membrane as a helical segment; the sequence is AFIQLLPVLVIVIISVITQLL.

The protein localises to the endoplasmic reticulum membrane. The chain is DnaJ homolog subfamily C member 18 (DNAJC18) from Macaca fascicularis (Crab-eating macaque).